The following is a 408-amino-acid chain: Probable E3 ubiquitin-protein ligase makorin-1 (408 aa).

2 C3H1-type zinc fingers span residues 34–61 and 63–90; these read WTRH…HDLA and SRSA…HNKP. Disordered regions lie at residues 90 to 114 and 154 to 173; these read PLQE…SGNI and EAYT…PADP. Over residues 162–173 the composition is skewed to basic and acidic residues; that stretch reads KPDEGREEPADP. Residues 174–201 form a C3H1-type 3 zinc finger; it reads ELKKQLCPYAAMGECRYGENCVYLHGDP. The segment at 202-229 is makorin-type Cys-His; the sequence is CDMCGLQVLHPVDTCQRSQHIKSCIEAH. The RING-type zinc-finger motif lies at 247-301; that stretch reads CGICMEVVYEKTNPSERRFGILSNCSHSYCLKCIRKWRSAKQFESKIIKSCPECR. The C3H1-type 4 zinc-finger motif lies at 330-359; it reads AMSSKSCRYFDEGRGTCPFGGNCFYRHAYP. The segment at 363-408 is disordered; the sequence is IEEPQPRQKSGMSSRYRIPSPSAGIDFGSLTSERAETRLRTRKTKL.

It catalyses the reaction S-ubiquitinyl-[E2 ubiquitin-conjugating enzyme]-L-cysteine + [acceptor protein]-L-lysine = [E2 ubiquitin-conjugating enzyme]-L-cysteine + N(6)-ubiquitinyl-[acceptor protein]-L-lysine.. The protein operates within protein modification; protein ubiquitination. In terms of biological role, E3 ubiquitin ligase catalyzing the covalent attachment of ubiquitin moieties onto substrate proteins. The chain is Probable E3 ubiquitin-protein ligase makorin-1 (mkrn1) from Xenopus laevis (African clawed frog).